The following is a 379-amino-acid chain: Transcription factor TIP2 (379 aa).

Residues 144–184 (MVGPFESSPTPRSGGGRKRSRATAGFHGGGPANGVEKKEKQ) form a disordered region. Residues 173–186 (GPANGVEKKEKQRR) are basic motif; degenerate. Residues 173 to 222 (GPANGVEKKEKQRRLRLTEKYNALMLLIPNRTKEDRATVISDAIEYIQEL) form the bHLH domain. The interval 187-222 (LRLTEKYNALMLLIPNRTKEDRATVISDAIEYIQEL) is helix-loop-helix motif.

The protein belongs to the bHLH protein family. As to quaternary structure, homodimer. Interacts with TDR, but not with EAT1. Highly expressed in anthers; strong expression in the middle layer and tapetum, and weak expression in the endothecium.

The protein resides in the nucleus. In terms of biological role, transcription factor that binds to the E-box-containing promoter regions of the transcription factors TDR and EAT1, activating their expression. May have a role in specifying the cell pattern of the inner anther walls and functioning in meiosis progression. Required for male reproduction. Acts downstream of UDT1 and GAMYB, but upstream of TDR1 and EAT1 in pollen development. In Oryza sativa subsp. japonica (Rice), this protein is Transcription factor TIP2 (TIP2).